Here is a 73-residue protein sequence, read N- to C-terminus: Large ribosomal subunit protein bL31 (73 aa).

The protein belongs to the bacterial ribosomal protein bL31 family. Type A subfamily. As to quaternary structure, part of the 50S ribosomal subunit.

Its function is as follows. Binds the 23S rRNA. The sequence is that of Large ribosomal subunit protein bL31 (rpmE) from Roseobacter denitrificans (strain ATCC 33942 / OCh 114) (Erythrobacter sp. (strain OCh 114)).